A 108-amino-acid polypeptide reads, in one-letter code: ATP-dependent Clp protease adapter protein ClpS (108 aa).

The protein belongs to the ClpS family. In terms of assembly, binds to the N-terminal domain of the chaperone ClpA.

Functionally, involved in the modulation of the specificity of the ClpAP-mediated ATP-dependent protein degradation. The polypeptide is ATP-dependent Clp protease adapter protein ClpS (Cupriavidus necator (strain ATCC 17699 / DSM 428 / KCTC 22496 / NCIMB 10442 / H16 / Stanier 337) (Ralstonia eutropha)).